The primary structure comprises 313 residues: D-alanine--D-alanine ligase (313 aa).

Residues 111–306 form the ATP-grasp domain; that stretch reads KQVWHSLGLP…FQQLVLAILA (196 aa). 137–192 lines the ATP pocket; it reads AAELGFPLIVKPAHEGSSIGMAKVESVEALIAAWQDAARYDSQVLVEQWIAGPEYT. D260, E273, and N275 together coordinate Mg(2+).

The protein belongs to the D-alanine--D-alanine ligase family. Requires Mg(2+) as cofactor. It depends on Mn(2+) as a cofactor.

It localises to the cytoplasm. The enzyme catalyses 2 D-alanine + ATP = D-alanyl-D-alanine + ADP + phosphate + H(+). It functions in the pathway cell wall biogenesis; peptidoglycan biosynthesis. Cell wall formation. The protein is D-alanine--D-alanine ligase of Ectopseudomonas mendocina (strain ymp) (Pseudomonas mendocina).